The primary structure comprises 74 residues: Small, acid-soluble spore protein Tlp (74 aa).

Residues 38–74 (AEELSSKEKDELSSKNERRKESVDGLRSEIKDEADSQ) are disordered.

This sequence belongs to the Tlp family.

The protein localises to the spore core. This Oceanobacillus iheyensis (strain DSM 14371 / CIP 107618 / JCM 11309 / KCTC 3954 / HTE831) protein is Small, acid-soluble spore protein Tlp.